The sequence spans 493 residues: MIFGIIVYLFLIYILHNAYSKYKRLNENQLPGPFPIPILGNIYQLTNLPHFDLTKMSEKYGKIFRIYLADLYTVIVCDPIIARELFVDKFDNFIDRPKIPSVKHGTFYHGTVASMGDNWKNNKEIVGKAMRKTNLKHIYQLLDDQVDVLIESMRTIESSGETFDPRYYLTKFTMSAMFKYIFNEDISKDEDVHNGQLAQLMKPMQKVFKDFGTGSLFDVLEITRPLYFLYLEWFTSHYYQVINFGKMKIYKHLETYKPDVQRDLMDLLIKEYGTETDDQILSISATVSDFFLAGVDTSATSLELIVMMLINYPEYQEKAYNEIKSALSSNGGGGGGGLTQRNKVLLSDRQSTPFVVSLFKETLRYKPISPFGLPRSTTSDIILNNGQFIPKNAQILINYHALSRNEEYFENPNQFDPTRFLNSDSNPAFMPFSIGPRNCVGSNFAQDEIYIALSNMILNFKFKSIDGKPVDETQTYGLTLKPNPFKVILEKRK.

The helical transmembrane segment at 1–21 (MIFGIIVYLFLIYILHNAYSK) threads the bilayer. Cys-439 is a binding site for heme.

It belongs to the cytochrome P450 family. The cofactor is heme.

It is found in the membrane. The chain is Probable cytochrome P450 508A2 (cyp508A2-1) from Dictyostelium discoideum (Social amoeba).